The chain runs to 452 residues: Scaffold protein ILK (452 aa).

Met1 is modified (N-acetylmethionine). ANK repeat units follow at residues 2–30 (DDIF…LNQG), 31–63 (DDHG…INVM), 64–96 (NRGD…INAV), 97–129 (NEHG…VSIC), and 130–174 (NKYG…GTTR). The segment at 33-139 (HGFSPLHWAC…NKYGEMPVDK (107 aa)) is interaction with LIMS1. Thr173 is subject to Phosphothreonine. Residues 180-212 (GTLNKHSGIDFKQLNFLAKLNENHSGELWKGRW) form a PH-like; mediates interaction with TGFB1I1 region. Ser186 is modified (phosphoserine). Residues 193–446 (LNFLAKLNEN…PKFDMIVPIL (254 aa)) enclose the Protein kinase domain. Positions 200, 202, 203, and 204 each coordinate ATP. Residue Ser246 is modified to Phosphoserine. ATP contacts are provided by His270, Met272, and Asn279. Asp339 is a binding site for Mg(2+). ATP is bound at residue Lys341. Residues 363 to 371 (KKPEDTNRR) carry the Nuclear localization signal motif. Lys426 is subject to N6-acetyllysine.

It belongs to the protein kinase superfamily. TKL Ser/Thr protein kinase family. In terms of assembly, component of the heterotrimeric IPP (ILK-PINCH-PARVIN) complex composed of ILK, LIMS1/PINCH and PARVA; the complex binds to F-actin via the C-terminal tail of LIMS1 and the N-terminal region of PARVA, promoting F-actin filament bundling. Formation of the IPP complex is dependent on protein kinase C and precedes integrin-mediated cell adhesion and spreading. ILK also interacts with LIMS2/PINCH2 and with PARVB and PARVG which may substitute for LIMS1 and PARVA in the IPP complex; PARVA and PARVB compete for the same binding site. Interaction with PARVG promotes the establishment of cell polarity required for leukocyte migration. Interacts with the cytoplasmic domain of integrin ITGB1 and may also interact with integrins ITGB2, ITGB3 and/or ITGB5. Interacts probably also with TGFB1I1. Interacts (via ANK repeats) with EPHA1 (via SAM domain); stimulated by EFNA1 but independent of the kinase activity of EPHA1. Interacts with FERMT2. Interacts with LIMD2; leading to activate the protein kinase activity. Interacts with PXN/PAXILLIN (via LD motif 4). Interacts with CCDC25 (via cytoplasmic region); initiating the ILK-PARVB cascade to induce cytoskeleton rearrangement and directional migration of cells. Interacts with IQGAP1; the interaction is required for localization of IQGAP1 to the cell cortex. Phosphorylation by PAK1 modulates ILK subcellular location by promoting its nuclear export. In terms of tissue distribution, highly expressed in lung, heart, kidney, liver, brain, spleen and skeletal muscle. Weakly expressed in testis.

The protein resides in the cell junction. Its subcellular location is the focal adhesion. It localises to the cell membrane. The protein localises to the cytoplasm. It is found in the myofibril. The protein resides in the sarcomere. Its subcellular location is the cell projection. It localises to the lamellipodium. The protein localises to the nucleus. It is found in the cytoskeleton. The protein resides in the microtubule organizing center. Its subcellular location is the centrosome. It localises to the cell cortex. Functionally, scaffold protein which mediates protein-protein interactions during a range of cellular events including focal adhesion assembly, cell adhesion and cell migration. Regulates integrin-mediated signal transduction by contributing to inside-out integrin activation. Recruits PARVA and LIMS1/PITCH to form the heterotrimeric IPP (ILK-PINCH-PARVIN) complex which binds to F-actin via the C-terminal tail of LIMS1 and the N-terminal region of PARVA, promoting F-actin filament bundling, a process required to generate force for actin cytoskeleton reorganization and subsequent dynamic cell adhesion events such as cell spreading and migration. Binding to PARVA promotes effective assembly of ILK into focal adhesions while PARVA-bound ILK can simultaneously engage integrin-beta cytoplasmic tails to mediate cell adhesion. Plays a role with PARVG in promoting the cell adhesion and spreading of leukocytes. Acts as an upstream effector of both AKT1/PKB and GSK3. Mediates trafficking of caveolae to the cell surface in an ITGB1-dependent manner by promoting the recruitment of IQGAP1 to the cell cortex which cooperates with its effector DIAPH1 to locally stabilize microtubules and allow stable insertion of caveolae into the plasma membrane. Required for the maintenance of mitotic spindle integrity by promoting phosphorylation of TACC3 by AURKA. Associates with chromatin and may act as a negative regulator of transcription when located in the nucleus. The protein is Scaffold protein ILK of Mus musculus (Mouse).